Reading from the N-terminus, the 525-residue chain is GMP synthase [glutamine-hydrolyzing] (525 aa).

The 200-residue stretch at Lys8–Asn207 folds into the Glutamine amidotransferase type-1 domain. Catalysis depends on Cys85, which acts as the Nucleophile. Catalysis depends on residues His181 and Glu183. The GMPS ATP-PPase domain occupies Trp208–Arg400. Ser235 to Ser241 contacts ATP.

Homodimer.

It catalyses the reaction XMP + L-glutamine + ATP + H2O = GMP + L-glutamate + AMP + diphosphate + 2 H(+). Its pathway is purine metabolism; GMP biosynthesis; GMP from XMP (L-Gln route): step 1/1. Catalyzes the synthesis of GMP from XMP. The sequence is that of GMP synthase [glutamine-hydrolyzing] from Shewanella woodyi (strain ATCC 51908 / MS32).